The primary structure comprises 506 residues: D-alanine--D-alanyl carrier protein ligase (506 aa).

Position 152–153 (Thr152–Ser153) interacts with ATP. Residue Asp197 participates in D-alanine binding. Asn292–Thr297 is an ATP binding site. Val301 contacts D-alanine. ATP-binding positions include Asp383, Tyr395–Arg398, and Lys494. Lys494 is a binding site for D-alanine.

This sequence belongs to the ATP-dependent AMP-binding enzyme family. DltA subfamily.

It is found in the cytoplasm. It catalyses the reaction holo-[D-alanyl-carrier protein] + D-alanine + ATP = D-alanyl-[D-alanyl-carrier protein] + AMP + diphosphate. The protein operates within cell wall biogenesis; lipoteichoic acid biosynthesis. Its function is as follows. Catalyzes the first step in the D-alanylation of lipoteichoic acid (LTA), the activation of D-alanine and its transfer onto the D-alanyl carrier protein (Dcp) DltC. In an ATP-dependent two-step reaction, forms a high energy D-alanyl-AMP intermediate, followed by transfer of the D-alanyl residue as a thiol ester to the phosphopantheinyl prosthetic group of the Dcp. D-alanylation of LTA plays an important role in modulating the properties of the cell wall in Gram-positive bacteria, influencing the net charge of the cell wall. This Lacticaseibacillus paracasei (strain ATCC 334 / BCRC 17002 / CCUG 31169 / CIP 107868 / KCTC 3260 / NRRL B-441) (Lactobacillus paracasei) protein is D-alanine--D-alanyl carrier protein ligase.